Reading from the N-terminus, the 234-residue chain is tRNA1(Val) (adenine(37)-N6)-methyltransferase (234 aa).

The protein belongs to the methyltransferase superfamily. tRNA (adenine-N(6)-)-methyltransferase family.

Its subcellular location is the cytoplasm. The enzyme catalyses adenosine(37) in tRNA1(Val) + S-adenosyl-L-methionine = N(6)-methyladenosine(37) in tRNA1(Val) + S-adenosyl-L-homocysteine + H(+). Specifically methylates the adenine in position 37 of tRNA(1)(Val) (anticodon cmo5UAC). The protein is tRNA1(Val) (adenine(37)-N6)-methyltransferase of Flavobacterium psychrophilum (strain ATCC 49511 / DSM 21280 / CIP 103535 / JIP02/86).